Consider the following 379-residue polypeptide: MAKKDYYEILGVSRNASQEEIRQAYKQLIKKWHPDRNHQNRKEAEEKFKEIQEAYEVLSDPEKRAMYDRFGYVGDVPPNAGSGGGFGGFGGFGGFEDIFKDFGDFINNDIFNIFFGDQRTSSRQKQRRAKRGEDINITVDVPFEQVFTGTTIPIEYDRYEVCSHCNGEGVEPGSGWVSCPKCHGTGVVREERRTFLGVIVNQYTCNQCGGTGKIPGETCHVCGGSGRIRKRHRVEVKIPAGVDNGTVIRVQGKGNAGYNGGGYGDLYVNVRITGHIDFERRGNDLIKEIKIDYVEAILGTKVKIKMPDGRVKEVKIPSGVQDGENIYVYGEGVPDMRTGRRGDLILKIKVDIPKRVSRSEKKLLKEIAKLRGKDVDEEE.

In terms of domain architecture, J spans 5–71 (DYYEILGVSR…EKRAMYDRFG (67 aa)). The segment at 149–231 (GTTIPIEYDR…CGGSGRIRKR (83 aa)) adopts a CR-type zinc-finger fold. Residues Cys162, Cys165, Cys179, Cys182, Cys205, Cys208, Cys219, and Cys222 each contribute to the Zn(2+) site. CXXCXGXG motif repeat units follow at residues 162-169 (CSHCNGEG), 179-186 (CPKCHGTG), 205-212 (CNQCGGTG), and 219-226 (CHVCGGSG).

Belongs to the DnaJ family. As to quaternary structure, homodimer. Requires Zn(2+) as cofactor.

It is found in the cytoplasm. Participates actively in the response to hyperosmotic and heat shock by preventing the aggregation of stress-denatured proteins and by disaggregating proteins, also in an autonomous, DnaK-independent fashion. Unfolded proteins bind initially to DnaJ; upon interaction with the DnaJ-bound protein, DnaK hydrolyzes its bound ATP, resulting in the formation of a stable complex. GrpE releases ADP from DnaK; ATP binding to DnaK triggers the release of the substrate protein, thus completing the reaction cycle. Several rounds of ATP-dependent interactions between DnaJ, DnaK and GrpE are required for fully efficient folding. Also involved, together with DnaK and GrpE, in the DNA replication of plasmids through activation of initiation proteins. The chain is Chaperone protein DnaJ from Thermosipho africanus (strain TCF52B).